The following is a 501-amino-acid chain: Ribose import ATP-binding protein RbsA (501 aa).

ABC transporter domains are found at residues 5–241 (LQLK…VGRK) and 252–495 (APGD…VGKL). 37 to 44 (GENGAGKS) provides a ligand contact to ATP.

It belongs to the ABC transporter superfamily. Ribose importer (TC 3.A.1.2.1) family. In terms of assembly, the complex is composed of an ATP-binding protein (RbsA), two transmembrane proteins (RbsC) and a solute-binding protein (RbsB).

The protein localises to the cell inner membrane. The catalysed reaction is D-ribose(out) + ATP + H2O = D-ribose(in) + ADP + phosphate + H(+). Functionally, part of the ABC transporter complex RbsABC involved in ribose import. Responsible for energy coupling to the transport system. This Shigella sonnei (strain Ss046) protein is Ribose import ATP-binding protein RbsA.